Reading from the N-terminus, the 89-residue chain is Small ribosomal subunit protein bS20 (89 aa).

The tract at residues 1 to 28 (MANHYSALKRARQTETRTARNRANTSRM) is disordered.

It belongs to the bacterial ribosomal protein bS20 family.

Its function is as follows. Binds directly to 16S ribosomal RNA. The chain is Small ribosomal subunit protein bS20 from Koribacter versatilis (strain Ellin345).